Reading from the N-terminus, the 115-residue chain is MTPPTAGDDILSRIADTLATRRPEAGGDPQSSYVAKLLSKAPDAFLKKIGEEATELVMAAKDGQPDRIISETADLWFHCLVALTHYNLRPEDVLAELARREGLSGLEEKARRPRD.

It belongs to the PRA-PH family.

It localises to the cytoplasm. It catalyses the reaction 1-(5-phospho-beta-D-ribosyl)-ATP + H2O = 1-(5-phospho-beta-D-ribosyl)-5'-AMP + diphosphate + H(+). Its pathway is amino-acid biosynthesis; L-histidine biosynthesis; L-histidine from 5-phospho-alpha-D-ribose 1-diphosphate: step 2/9. This is Phosphoribosyl-ATP pyrophosphatase from Bordetella bronchiseptica (strain ATCC BAA-588 / NCTC 13252 / RB50) (Alcaligenes bronchisepticus).